We begin with the raw amino-acid sequence, 205 residues long: High frequency lysogenization protein HflD homolog (205 aa).

Belongs to the HflD family.

It is found in the cytoplasm. Its subcellular location is the cell inner membrane. This is High frequency lysogenization protein HflD homolog from Vibrio atlanticus (strain LGP32) (Vibrio splendidus (strain Mel32)).